A 317-amino-acid chain; its full sequence is Ribose-phosphate pyrophosphokinase (317 aa).

ATP contacts are provided by residues 43-45 and 102-103; these read DGE and RQ. Residues His136 and Asp175 each contribute to the Mg(2+) site. Residue Lys198 is part of the active site. Residues Arg200, Asp224, and 228-232 contribute to the D-ribose 5-phosphate site; that span reads DTAGT.

This sequence belongs to the ribose-phosphate pyrophosphokinase family. Class I subfamily. Homohexamer. The cofactor is Mg(2+).

The protein resides in the cytoplasm. The catalysed reaction is D-ribose 5-phosphate + ATP = 5-phospho-alpha-D-ribose 1-diphosphate + AMP + H(+). The protein operates within metabolic intermediate biosynthesis; 5-phospho-alpha-D-ribose 1-diphosphate biosynthesis; 5-phospho-alpha-D-ribose 1-diphosphate from D-ribose 5-phosphate (route I): step 1/1. Functionally, involved in the biosynthesis of the central metabolite phospho-alpha-D-ribosyl-1-pyrophosphate (PRPP) via the transfer of pyrophosphoryl group from ATP to 1-hydroxyl of ribose-5-phosphate (Rib-5-P). This chain is Ribose-phosphate pyrophosphokinase, found in Corynebacterium ammoniagenes (Brevibacterium ammoniagenes).